Here is a 643-residue protein sequence, read N- to C-terminus: Threonine--tRNA ligase (643 aa).

The region spanning 1–61 (MVAISLPDGS…TTDASVSLIT (61 aa)) is the TGS domain. The segment at 243 to 534 (DHRRVGQEMD…LIENCAGRFP (292 aa)) is catalytic. Zn(2+)-binding residues include Cys334, His385, and His511.

It belongs to the class-II aminoacyl-tRNA synthetase family. As to quaternary structure, homodimer. Requires Zn(2+) as cofactor.

Its subcellular location is the cytoplasm. The enzyme catalyses tRNA(Thr) + L-threonine + ATP = L-threonyl-tRNA(Thr) + AMP + diphosphate + H(+). In terms of biological role, catalyzes the attachment of threonine to tRNA(Thr) in a two-step reaction: L-threonine is first activated by ATP to form Thr-AMP and then transferred to the acceptor end of tRNA(Thr). Also edits incorrectly charged L-seryl-tRNA(Thr). This Rhodospirillum rubrum (strain ATCC 11170 / ATH 1.1.1 / DSM 467 / LMG 4362 / NCIMB 8255 / S1) protein is Threonine--tRNA ligase.